A 323-amino-acid polypeptide reads, in one-letter code: Ribose-phosphate pyrophosphokinase 2 (323 aa).

Residues 43 to 45 and 102 to 103 each bind ATP; these read DGE and RQ. Mg(2+) is bound by residues histidine 136 and aspartate 177. The active site involves lysine 200. D-ribose 5-phosphate contacts are provided by residues arginine 202, aspartate 226, and 230–234; that span reads DTAGT.

The protein belongs to the ribose-phosphate pyrophosphokinase family. Class I subfamily. Homohexamer. Mg(2+) serves as cofactor.

Its subcellular location is the cytoplasm. The catalysed reaction is D-ribose 5-phosphate + ATP = 5-phospho-alpha-D-ribose 1-diphosphate + AMP + H(+). It functions in the pathway metabolic intermediate biosynthesis; 5-phospho-alpha-D-ribose 1-diphosphate biosynthesis; 5-phospho-alpha-D-ribose 1-diphosphate from D-ribose 5-phosphate (route I): step 1/1. Functionally, involved in the biosynthesis of the central metabolite phospho-alpha-D-ribosyl-1-pyrophosphate (PRPP) via the transfer of pyrophosphoryl group from ATP to 1-hydroxyl of ribose-5-phosphate (Rib-5-P). This is Ribose-phosphate pyrophosphokinase 2 from Enterococcus faecalis (strain ATCC 700802 / V583).